The following is a 117-amino-acid chain: uncharacterized protein (117 aa).

Positions Arg96–Glu117 are disordered.

This is an uncharacterized protein from Saccharomyces cerevisiae (strain ATCC 204508 / S288c) (Baker's yeast).